Reading from the N-terminus, the 472-residue chain is Eukaryotic translation initiation factor 2 subunit 3 (472 aa).

Alanine 2 is subject to N-acetylalanine; partial. A tr-type G domain is found at 39-247 (QATINIGTIG…YIVKKIPVPL (209 aa)). A G1 region spans residues 48 to 55 (GHVAHGKS). Position 51–56 (51–56 (AHGKST)) interacts with GTP. A G2 region spans residues 76 to 80 (NITIK). The tract at residues 134–137 (DCPG) is G3. GTP-binding positions include 190-193 (NKID) and 225-227 (SAQ). The tract at residues 190 to 193 (NKID) is G4. A G5 region spans residues 225–227 (SAQ). Positions 457-469 (GQIRRGVTIKPTV) are interacts with CDC123.

The protein belongs to the TRAFAC class translation factor GTPase superfamily. Classic translation factor GTPase family. EIF2G subfamily. In terms of assembly, eukaryotic translation initiation factor 2 eIF2 is a heterotrimeric complex composed of an alpha (EIF2S1), a beta (EIF2S2) and a gamma (EIF2S3) chain. eIF2 is member of the 43S pre-initiation complex (43S PIC).

Its subcellular location is the cytoplasm. The protein resides in the cytosol. The enzyme catalyses GTP + H2O = GDP + phosphate + H(+). Functionally, member of the eIF2 complex that functions in the early steps of protein synthesis by forming a ternary complex with GTP and initiator tRNA. This complex binds to a 40S ribosomal subunit, followed by mRNA binding to form the 43S pre-initiation complex (43S PIC). Junction of the 60S ribosomal subunit to form the 80S initiation complex is preceded by hydrolysis of the GTP bound to eIF2 and release of an eIF2-GDP binary complex. In order for eIF2 to recycle and catalyze another round of initiation, the GDP bound to eIF2 must exchange with GTP by way of a reaction catalyzed by eIF-2B. The protein is Eukaryotic translation initiation factor 2 subunit 3 (EIF2S3) of Gallus gallus (Chicken).